Consider the following 155-residue polypeptide: 6,7-dimethyl-8-ribityllumazine synthase (155 aa).

Residues tryptophan 23, 57–59, and 81–83 contribute to the 5-amino-6-(D-ribitylamino)uracil site; these read AWE and CVI. Residue 86 to 87 participates in (2S)-2-hydroxy-3-oxobutyl phosphate binding; the sequence is DT. The active-site Proton donor is histidine 89. Asparagine 114 is a 5-amino-6-(D-ribitylamino)uracil binding site. Arginine 128 contributes to the (2S)-2-hydroxy-3-oxobutyl phosphate binding site.

This sequence belongs to the DMRL synthase family. Forms an icosahedral capsid composed of 60 subunits, arranged as a dodecamer of pentamers.

The enzyme catalyses (2S)-2-hydroxy-3-oxobutyl phosphate + 5-amino-6-(D-ribitylamino)uracil = 6,7-dimethyl-8-(1-D-ribityl)lumazine + phosphate + 2 H2O + H(+). It participates in cofactor biosynthesis; riboflavin biosynthesis; riboflavin from 2-hydroxy-3-oxobutyl phosphate and 5-amino-6-(D-ribitylamino)uracil: step 1/2. Functionally, catalyzes the formation of 6,7-dimethyl-8-ribityllumazine by condensation of 5-amino-6-(D-ribitylamino)uracil with 3,4-dihydroxy-2-butanone 4-phosphate. This is the penultimate step in the biosynthesis of riboflavin. The sequence is that of 6,7-dimethyl-8-ribityllumazine synthase from Stenotrophomonas maltophilia (strain R551-3).